Here is a 593-residue protein sequence, read N- to C-terminus: Arginine--tRNA ligase (593 aa).

The 'HIGH' region signature appears at Ala138–His148.

It belongs to the class-I aminoacyl-tRNA synthetase family. In terms of assembly, monomer.

The protein localises to the cytoplasm. It catalyses the reaction tRNA(Arg) + L-arginine + ATP = L-arginyl-tRNA(Arg) + AMP + diphosphate. The chain is Arginine--tRNA ligase from Burkholderia orbicola (strain MC0-3).